Here is a 123-residue protein sequence, read N- to C-terminus: Fluoride-specific ion channel FluC 1 (123 aa).

The next 3 membrane-spanning stretches (helical) occupy residues 33–53, 59–79, and 98–118; these read TFLINISGAFVIGYLSVLFGV, YGTMLNAGVLTGILGGYTTFS, and VFYLVASVLSGLFAAWLGAML. 2 residues coordinate Na(+): Gly73 and Thr76.

This sequence belongs to the fluoride channel Fluc/FEX (TC 1.A.43) family.

The protein resides in the cell inner membrane. The catalysed reaction is fluoride(in) = fluoride(out). Na(+) is not transported, but it plays an essential structural role and its presence is essential for fluoride channel function. Its function is as follows. Fluoride-specific ion channel. Important for reducing fluoride concentration in the cell, thus reducing its toxicity. This Brucella melitensis biotype 1 (strain ATCC 23456 / CCUG 17765 / NCTC 10094 / 16M) protein is Fluoride-specific ion channel FluC 1.